A 230-amino-acid polypeptide reads, in one-letter code: Ureidoacrylate amidohydrolase RutB (230 aa).

Residue aspartate 24 is the Proton acceptor of the active site. Lysine 133 is an active-site residue. Cysteine 166 serves as the catalytic Nucleophile.

It belongs to the isochorismatase family. RutB subfamily.

The enzyme catalyses (Z)-3-ureidoacrylate + H2O + H(+) = (Z)-3-aminoacrylate + NH4(+) + CO2. It catalyses the reaction (Z)-3-ureidoacrylate + H2O = (Z)-3-aminoacrylate + carbamate + H(+). The catalysed reaction is (Z)-2-methylureidoacrylate + H2O + H(+) = (Z)-2-methylaminoacrylate + NH4(+) + CO2. In terms of biological role, hydrolyzes ureidoacrylate to form aminoacrylate and carbamate. The carbamate hydrolyzes spontaneously, thereby releasing one of the nitrogen atoms of the pyrimidine ring as ammonia and one of its carbon atoms as CO2. The polypeptide is Ureidoacrylate amidohydrolase RutB (Escherichia coli O127:H6 (strain E2348/69 / EPEC)).